We begin with the raw amino-acid sequence, 1159 residues long: DNA-directed RNA polymerase subunit beta (1159 aa).

The protein belongs to the RNA polymerase beta chain family. The RNAP catalytic core consists of 2 alpha, 1 beta, 1 beta' and 1 omega subunit. When a sigma factor is associated with the core the holoenzyme is formed, which can initiate transcription.

It carries out the reaction RNA(n) + a ribonucleoside 5'-triphosphate = RNA(n+1) + diphosphate. DNA-dependent RNA polymerase catalyzes the transcription of DNA into RNA using the four ribonucleoside triphosphates as substrates. The chain is DNA-directed RNA polymerase subunit beta from Deinococcus radiodurans (strain ATCC 13939 / DSM 20539 / JCM 16871 / CCUG 27074 / LMG 4051 / NBRC 15346 / NCIMB 9279 / VKM B-1422 / R1).